Reading from the N-terminus, the 501-residue chain is ATP synthase subunit alpha (501 aa).

An ATP-binding site is contributed by 169–176 (GDRQTGKT).

The protein belongs to the ATPase alpha/beta chains family. F-type ATPases have 2 components, CF(1) - the catalytic core - and CF(0) - the membrane proton channel. CF(1) has five subunits: alpha(3), beta(3), gamma(1), delta(1), epsilon(1). CF(0) has three main subunits: a(1), b(2) and c(9-12). The alpha and beta chains form an alternating ring which encloses part of the gamma chain. CF(1) is attached to CF(0) by a central stalk formed by the gamma and epsilon chains, while a peripheral stalk is formed by the delta and b chains.

Its subcellular location is the cell inner membrane. It carries out the reaction ATP + H2O + 4 H(+)(in) = ADP + phosphate + 5 H(+)(out). Its function is as follows. Produces ATP from ADP in the presence of a proton gradient across the membrane. The alpha chain is a regulatory subunit. The chain is ATP synthase subunit alpha from Campylobacter jejuni subsp. doylei (strain ATCC BAA-1458 / RM4099 / 269.97).